The following is a 411-amino-acid chain: Dihydrolipoyllysine-residue succinyltransferase component of 2-oxoglutarate dehydrogenase complex (411 aa).

The region spanning 2-77 (TTEIRVPTLG…EVNALLGAVE (76 aa)) is the Lipoyl-binding domain. The residue at position 43 (Lys43) is an N6-lipoyllysine. The span at 82-100 (SVAKSPSSSETSVSAAPSE) shows a compositional bias: low complexity. A disordered region spans residues 82-115 (SVAKSPSSSETSVSAAPSELEQSSSSNTMPPAPS). Polar residues predominate over residues 101 to 110 (LEQSSSSNTM). The 38-residue stretch at 111 to 148 (PPAPSAAKLMAENNIAKSDILGSGKRGQILKEDVLNVL) folds into the Peripheral subunit-binding (PSBD) domain. Catalysis depends on residues His382 and Asp386.

The protein belongs to the 2-oxoacid dehydrogenase family. Forms a 24-polypeptide structural core with octahedral symmetry. Part of the 2-oxoglutarate dehydrogenase (OGDH) complex composed of E1 (2-oxoglutarate dehydrogenase), E2 (dihydrolipoamide succinyltransferase) and E3 (dihydrolipoamide dehydrogenase); the complex contains multiple copies of the three enzymatic components (E1, E2 and E3). Requires (R)-lipoate as cofactor.

The enzyme catalyses N(6)-[(R)-dihydrolipoyl]-L-lysyl-[protein] + succinyl-CoA = N(6)-[(R)-S(8)-succinyldihydrolipoyl]-L-lysyl-[protein] + CoA. The protein operates within amino-acid degradation; L-lysine degradation via saccharopine pathway; glutaryl-CoA from L-lysine: step 6/6. Its function is as follows. E2 component of the 2-oxoglutarate dehydrogenase (OGDH) complex which catalyzes the second step in the conversion of 2-oxoglutarate to succinyl-CoA and CO(2). In Bartonella vinsonii subsp. berkhoffii, this protein is Dihydrolipoyllysine-residue succinyltransferase component of 2-oxoglutarate dehydrogenase complex (sucB).